The primary structure comprises 265 residues: 3-methyl-2-oxobutanoate hydroxymethyltransferase (265 aa).

Residues aspartate 45 and aspartate 84 each coordinate Mg(2+). 3-methyl-2-oxobutanoate contacts are provided by residues 45–46 (DS), aspartate 84, and lysine 112. A Mg(2+)-binding site is contributed by glutamate 114. Residue glutamate 182 is the Proton acceptor of the active site.

This sequence belongs to the PanB family. In terms of assembly, homodecamer; pentamer of dimers. Mg(2+) serves as cofactor.

It is found in the cytoplasm. The enzyme catalyses 3-methyl-2-oxobutanoate + (6R)-5,10-methylene-5,6,7,8-tetrahydrofolate + H2O = 2-dehydropantoate + (6S)-5,6,7,8-tetrahydrofolate. Its pathway is cofactor biosynthesis; (R)-pantothenate biosynthesis; (R)-pantoate from 3-methyl-2-oxobutanoate: step 1/2. In terms of biological role, catalyzes the reversible reaction in which hydroxymethyl group from 5,10-methylenetetrahydrofolate is transferred onto alpha-ketoisovalerate to form ketopantoate. The protein is 3-methyl-2-oxobutanoate hydroxymethyltransferase of Baumannia cicadellinicola subsp. Homalodisca coagulata.